We begin with the raw amino-acid sequence, 525 residues long: GMP synthase [glutamine-hydrolyzing] (525 aa).

The Glutamine amidotransferase type-1 domain occupies 8 to 207 (KILILDFGSQ…ALDICGCDAN (200 aa)). The active-site Nucleophile is the C85. Residues H181 and E183 contribute to the active site. Positions 208–400 (WKPSSIIEDA…LGLPYDMLYR (193 aa)) constitute a GMPS ATP-PPase domain. 235–241 (SGGVDSS) is an ATP binding site.

Homodimer.

The catalysed reaction is XMP + L-glutamine + ATP + H2O = GMP + L-glutamate + AMP + diphosphate + 2 H(+). It functions in the pathway purine metabolism; GMP biosynthesis; GMP from XMP (L-Gln route): step 1/1. In terms of biological role, catalyzes the synthesis of GMP from XMP. This Shewanella piezotolerans (strain WP3 / JCM 13877) protein is GMP synthase [glutamine-hydrolyzing].